We begin with the raw amino-acid sequence, 407 residues long: E3 ubiquitin-protein ligase TRIM13 (407 aa).

The segment at 10–58 (CPICCSLFDDPRVLPCSHNFCKKCLEGLLEGNVRNSLWRPSPFKCPTCR) adopts an RING-type zinc-finger fold. The segment at 89–131 (PKMPVCKEHLGQPLNIFCVTDMQLICGVCATRGSHTKHVFSSI) adopts a B box-type zinc-finger fold. The Zn(2+) site is built by C94, H97, C117, and H123. Residues 172–200 (LQLLTKDSDKVKEFFEKLQHTLDQKKNEI) adopt a coiled-coil conformation. Residues 316–336 (LLLMAVVLLGLLVFFGPTVFL) form a helical membrane-spanning segment.

In terms of assembly, interacts (via C-terminal domain) with VCP. Interacts with AKT1; the interaction ubiquitinates AKT1 and leads to its proteasomal degradation. Interacts with MDM2; the interaction ubiquitinates AKT1 and leads to its proteasomal degradation. Interacts with p62/SQSTM1. Interacts with TRAF6. Interacts with IKBKG/NEMO. Auto-ubiquitinated; requires the RING-type zinc finger. Auto-polyubiquitination leads to proteasomal degradation.

The protein resides in the endoplasmic reticulum membrane. It carries out the reaction S-ubiquitinyl-[E2 ubiquitin-conjugating enzyme]-L-cysteine + [acceptor protein]-L-lysine = [E2 ubiquitin-conjugating enzyme]-L-cysteine + N(6)-ubiquitinyl-[acceptor protein]-L-lysine.. It participates in protein modification; protein ubiquitination. In terms of biological role, endoplasmic reticulum (ER) membrane anchored E3 ligase involved in the retrotranslocation and turnover of membrane and secretory proteins from the ER through a set of processes named ER-associated degradation (ERAD). This process acts on misfolded proteins as well as in the regulated degradation of correctly folded proteins. Enhances ionizing radiation-induced p53/TP53 stability and apoptosis via ubiquitinating MDM2 and AKT1 and decreasing AKT1 kinase activity through MDM2 and AKT1 proteasomal degradation. Regulates ER stress-induced autophagy, and may act as a tumor suppressor. Also plays a role in innate immune response by stimulating NF-kappa-B activity in the TLR2 signaling pathway. Ubiquitinates TRAF6 via the 'Lys-29'-linked polyubiquitination chain resulting in NF-kappa-B activation. Participates as well in T-cell receptor-mediated NF-kappa-B activation. In the presence of TNF, modulates the IKK complex by regulating IKBKG/NEMO ubiquitination leading to the repression of NF-kappa-B. The polypeptide is E3 ubiquitin-protein ligase TRIM13 (Trim13) (Rattus norvegicus (Rat)).